The chain runs to 75 residues: Mating pheromone Er-10 (75 aa).

Residues methionine 1 to alanine 19 form the signal peptide. Positions phenylalanine 20–arginine 37 are excised as a propeptide. Cystine bridges form between cysteine 40-cysteine 56, cysteine 47-cysteine 74, and cysteine 52-cysteine 64.

As to quaternary structure, homodimer.

Its subcellular location is the secreted. Its function is as follows. Mating ciliate pheromones (or gamones) are diffusible extracellular communication signals that distinguish different intraspecific classes of cells commonly referred to as 'mating types'. They prepare the latter for conjugation by changing their cell surface properties. This chain is Mating pheromone Er-10 (MAT10), found in Euplotes raikovi.